Consider the following 777-residue polypeptide: Santalene and bergamotene synthase, chloroplastic (777 aa).

The transit peptide at 1 to 36 (MIVGYRSTIITLSHPKLGNGKTISSNAIFQRSCRVR) directs the protein to the chloroplast. The Mg(2+) site is built by Asp-530 and Asp-534. The DDXXD motif motif lies at 530-534 (DDQFD).

The protein belongs to the terpene synthase family. Tpse subfamily. It depends on Mg(2+) as a cofactor. The cofactor is Mn(2+).

It localises to the plastid. It is found in the chloroplast. It carries out the reaction (2Z,6Z)-farnesyl diphosphate = (+)-alpha-santalene + diphosphate. It catalyses the reaction (2Z,6Z)-farnesyl diphosphate = (+)-endo-beta-bergamotene + diphosphate. The catalysed reaction is (2Z,6Z)-farnesyl diphosphate = (1S,5S,6S)-alpha-bergamotene + diphosphate. (2Z,6Z)-farnesyl diphosphate cyclizing enzyme. Produces (+)-alpha-santalene, (+)-endo-beta-bergamotene, (-)-endo-alpha-bergamotene, and at lower amounts, (-)exo-alpha-bergamotene and (+)-epi-beta-santalene. Not able to use geranyl diphosphate, E,E-farnesyl diphosphate or E,E,E-geranylgeranyl diphosphate as substrates, but able to use Neryl diphosphate to make the monoterpene terpineol. The chain is Santalene and bergamotene synthase, chloroplastic (SBS) from Solanum habrochaites (Wild tomato).